Reading from the N-terminus, the 277-residue chain is Inositol monophosphatase 1 (277 aa).

Mg(2+) contacts are provided by Glu-70, Asp-90, Ile-92, and Asp-93. A substrate-binding site is contributed by Glu-70. Substrate is bound at residue 92 to 95 (IDGT). At Thr-168 the chain carries Phosphothreonine. Residues 194–196 (GTA), Glu-213, and Asp-220 each bind substrate. A Mg(2+)-binding site is contributed by Asp-220.

The protein belongs to the inositol monophosphatase superfamily. In terms of assembly, homodimer. Mg(2+) serves as cofactor.

The protein localises to the cytoplasm. The catalysed reaction is a myo-inositol phosphate + H2O = myo-inositol + phosphate. It carries out the reaction 1D-myo-inositol 1-phosphate + H2O = myo-inositol + phosphate. The enzyme catalyses 1D-myo-inositol 2-phosphate + H2O = myo-inositol + phosphate. It catalyses the reaction 1D-myo-inositol 3-phosphate + H2O = myo-inositol + phosphate. The catalysed reaction is 1D-myo-inositol 4-phosphate + H2O = myo-inositol + phosphate. It carries out the reaction 1D-myo-inositol 5-phosphate + H2O = myo-inositol + phosphate. The enzyme catalyses 1D-myo-inositol 6-phosphate + H2O = myo-inositol + phosphate. It catalyses the reaction scyllo-inositol 1-phosphate + H2O = scyllo-inositol + phosphate. The catalysed reaction is alpha-D-galactose 1-phosphate + H2O = D-galactose + phosphate. It carries out the reaction alpha-D-glucose 1-phosphate + H2O = D-glucose + phosphate. The enzyme catalyses D-glucose 6-phosphate + H2O = D-glucose + phosphate. It catalyses the reaction beta-D-fructose 1-phosphate + H2O = D-fructose + phosphate. The catalysed reaction is glycerol 2-phosphate + H2O = glycerol + phosphate. It carries out the reaction adenosine 2'-phosphate + H2O = adenosine + phosphate. Its pathway is polyol metabolism; myo-inositol biosynthesis; myo-inositol from D-glucose 6-phosphate: step 2/2. Inhibited by Li(+), Ca(2+) and Mn(2+), but also by Mg(2+) at concentrations above 3 mM. Functionally, phosphatase involved in the dephosphorylation of myo-inositol monophosphate to generate myo-inositol. Is also able to dephosphorylate scyllo-inositol-phosphate, myo-inositol 1,4-diphosphate, scyllo-inositol-1,3-diphosphate and scyllo-inositol-1,4-diphosphate. Also dephosphorylates in vitro other sugar-phosphates including D-galactose-1-phosphate, glucose-1-phosphate, glucose-6-phosphate, fructose-1-phosphate, beta-glycerophosphate and 2'-AMP. Responsible for the provision of inositol required for synthesis of phosphatidylinositol and polyphosphoinositides, and involved in maintaining normal brain function. Has been implicated as the pharmacological target for lithium Li(+) action in brain. In Pongo abelii (Sumatran orangutan), this protein is Inositol monophosphatase 1 (IMPA1).